The primary structure comprises 77 residues: RNA-binding protein Hfq (77 aa).

The 61-residue stretch at 10 to 70 (DIFLNSARKN…ITTVTPEKPI (61 aa)) folds into the Sm domain.

Belongs to the Hfq family. Homohexamer.

In terms of biological role, RNA chaperone that binds small regulatory RNA (sRNAs) and mRNAs to facilitate mRNA translational regulation in response to envelope stress, environmental stress and changes in metabolite concentrations. Also binds with high specificity to tRNAs. The chain is RNA-binding protein Hfq from Clostridium botulinum (strain Eklund 17B / Type B).